A 429-amino-acid polypeptide reads, in one-letter code: Glutamate-1-semialdehyde 2,1-aminomutase 1 (429 aa).

The residue at position 267 (Lys267) is an N6-(pyridoxal phosphate)lysine.

Belongs to the class-III pyridoxal-phosphate-dependent aminotransferase family. HemL subfamily. In terms of assembly, homodimer. Pyridoxal 5'-phosphate serves as cofactor.

It is found in the cytoplasm. The catalysed reaction is (S)-4-amino-5-oxopentanoate = 5-aminolevulinate. The protein operates within porphyrin-containing compound metabolism; protoporphyrin-IX biosynthesis; 5-aminolevulinate from L-glutamyl-tRNA(Glu): step 2/2. The polypeptide is Glutamate-1-semialdehyde 2,1-aminomutase 1 (Staphylococcus carnosus (strain TM300)).